We begin with the raw amino-acid sequence, 366 residues long: tRNA/tmRNA (uracil-C(5))-methyltransferase (366 aa).

S-adenosyl-L-methionine-binding residues include Q190, Y218, N223, E239, and D299. The Nucleophile role is filled by C324. Residue E358 is the Proton acceptor of the active site.

The protein belongs to the class I-like SAM-binding methyltransferase superfamily. RNA M5U methyltransferase family. TrmA subfamily.

The catalysed reaction is uridine(54) in tRNA + S-adenosyl-L-methionine = 5-methyluridine(54) in tRNA + S-adenosyl-L-homocysteine + H(+). It carries out the reaction uridine(341) in tmRNA + S-adenosyl-L-methionine = 5-methyluridine(341) in tmRNA + S-adenosyl-L-homocysteine + H(+). Its function is as follows. Dual-specificity methyltransferase that catalyzes the formation of 5-methyluridine at position 54 (m5U54) in all tRNAs, and that of position 341 (m5U341) in tmRNA (transfer-mRNA). This chain is tRNA/tmRNA (uracil-C(5))-methyltransferase, found in Escherichia coli O81 (strain ED1a).